We begin with the raw amino-acid sequence, 117 residues long: Ribosome-binding factor A (117 aa).

The protein belongs to the RbfA family. As to quaternary structure, monomer. Binds 30S ribosomal subunits, but not 50S ribosomal subunits or 70S ribosomes.

Its subcellular location is the cytoplasm. One of several proteins that assist in the late maturation steps of the functional core of the 30S ribosomal subunit. Associates with free 30S ribosomal subunits (but not with 30S subunits that are part of 70S ribosomes or polysomes). Required for efficient processing of 16S rRNA. May interact with the 5'-terminal helix region of 16S rRNA. The polypeptide is Ribosome-binding factor A (Leptospira interrogans serogroup Icterohaemorrhagiae serovar copenhageni (strain Fiocruz L1-130)).